The primary structure comprises 479 residues: Cell division protein FtsA (479 aa).

Residues 417-458 (QGRQTERKENEQRDNTDRQREDTPKQTVKKKEKTGPSFGDKL) are disordered. Over residues 420–440 (QTERKENEQRDNTDRQREDTP) the composition is skewed to basic and acidic residues.

The protein belongs to the FtsA/MreB family. As to quaternary structure, self-interacts. Interacts with FtsZ.

The protein localises to the cell inner membrane. Its function is as follows. Cell division protein that is involved in the assembly of the Z ring. May serve as a membrane anchor for the Z ring. The chain is Cell division protein FtsA from Porphyromonas gingivalis (strain ATCC BAA-308 / W83).